The following is a 297-amino-acid chain: Probable endonuclease 4 (297 aa).

Zn(2+)-binding residues include His-69, His-110, Glu-145, Asp-179, His-182, His-214, Asp-227, His-229, and Glu-259.

The protein belongs to the AP endonuclease 2 family. Requires Zn(2+) as cofactor.

It carries out the reaction Endonucleolytic cleavage to 5'-phosphooligonucleotide end-products.. In terms of biological role, endonuclease IV plays a role in DNA repair. It cleaves phosphodiester bonds at apurinic or apyrimidinic (AP) sites, generating a 3'-hydroxyl group and a 5'-terminal sugar phosphate. This chain is Probable endonuclease 4, found in Listeria monocytogenes serotype 4b (strain CLIP80459).